A 542-amino-acid polypeptide reads, in one-letter code: uncharacterized protein (542 aa).

The Extracellular portion of the chain corresponds to 1-78 (MSVQKEEYDI…EEKKLVRKMD (78 aa)). Residues 79 to 99 (LKIFLWVFIMFAFLDLIRKNI) traverse the membrane as a helical segment. Residues 100–119 (ARAVSDNFIVDLKMNTNDYN) are Cytoplasmic-facing. The chain crosses the membrane as a helical span at residues 120-140 (LGQTVYLVIFLASELPGNLLS). At 141–147 (KRFGPER) the chain is on the extracellular side. The helical transmembrane segment at 148–168 (VIPVQIVLWSVICITQAGLKN) threads the bilayer. Over 169–176 (RGQFIATR) the chain is Cytoplasmic. A helical membrane pass occupies residues 177 to 197 (CLLGMVQGGFIPDNILYLSYY). The Extracellular portion of the chain corresponds to 198-208 (YTGAELTFRLS). A helical membrane pass occupies residues 209 to 229 (FFWCAIPLFQILGSLLASGII). Over 230–241 (EMRGIHNLAGWQ) the chain is Cytoplasmic. Residues 242-262 (YLFIIEGFLSLSVGVASFYLM) traverse the membrane as a helical segment. Over 263 to 326 (RRGPTQTGES…TLTEFDLWPL (64 aa)) the chain is Extracellular. The chain crosses the membrane as a helical span at residues 327–347 (FIQGITAFISLQTVGSYLSLI). Topologically, residues 348–359 (LKSLNYSTFLSN) are cytoplasmic. A helical membrane pass occupies residues 360–380 (ILAIPGQALLLINLPLAALLS). The Extracellular segment spans residues 381 to 387 (RKLKEKS). The chain crosses the membrane as a helical span at residues 388–408 (LCVGIANVWVLPFIVSLVALP). Residues 409–416 (TDTNPWIK) are Cytoplasmic-facing. The chain crosses the membrane as a helical span at residues 417-437 (YILLTGILGLPYTHSILAGWV). The Extracellular portion of the chain corresponds to 438-482 (SEISNSVRSRTVGTALYNMSAQVGAIIASNMYRNDDKPYYTRGNK). Residues 483–503 (ILLGFTCFNICMAVATKFYYI) traverse the membrane as a helical segment. The Cytoplasmic segment spans residues 504–542 (SRNKYKDRKWNSMTKEEQINYLDTTKDKGMKRLDYRFIH).

It belongs to the major facilitator superfamily. Allantoate permease family.

The protein resides in the membrane. This is an uncharacterized protein from Saccharomyces cerevisiae (strain ATCC 204508 / S288c) (Baker's yeast).